Here is a 211-residue protein sequence, read N- to C-terminus: Thiamine-phosphate synthase (211 aa).

4-amino-2-methyl-5-(diphosphooxymethyl)pyrimidine-binding positions include 37–41 and N69; that span reads QLRIK. 2 residues coordinate Mg(2+): D70 and D89. S108 is a 4-amino-2-methyl-5-(diphosphooxymethyl)pyrimidine binding site. 134–136 contributes to the 2-[(2R,5Z)-2-carboxy-4-methylthiazol-5(2H)-ylidene]ethyl phosphate binding site; the sequence is TQT. K137 is a binding site for 4-amino-2-methyl-5-(diphosphooxymethyl)pyrimidine. Residues G166 and 186–187 each bind 2-[(2R,5Z)-2-carboxy-4-methylthiazol-5(2H)-ylidene]ethyl phosphate; that span reads VS.

Belongs to the thiamine-phosphate synthase family. Mg(2+) is required as a cofactor.

It carries out the reaction 2-[(2R,5Z)-2-carboxy-4-methylthiazol-5(2H)-ylidene]ethyl phosphate + 4-amino-2-methyl-5-(diphosphooxymethyl)pyrimidine + 2 H(+) = thiamine phosphate + CO2 + diphosphate. The enzyme catalyses 2-(2-carboxy-4-methylthiazol-5-yl)ethyl phosphate + 4-amino-2-methyl-5-(diphosphooxymethyl)pyrimidine + 2 H(+) = thiamine phosphate + CO2 + diphosphate. The catalysed reaction is 4-methyl-5-(2-phosphooxyethyl)-thiazole + 4-amino-2-methyl-5-(diphosphooxymethyl)pyrimidine + H(+) = thiamine phosphate + diphosphate. It functions in the pathway cofactor biosynthesis; thiamine diphosphate biosynthesis; thiamine phosphate from 4-amino-2-methyl-5-diphosphomethylpyrimidine and 4-methyl-5-(2-phosphoethyl)-thiazole: step 1/1. Condenses 4-methyl-5-(beta-hydroxyethyl)thiazole monophosphate (THZ-P) and 2-methyl-4-amino-5-hydroxymethyl pyrimidine pyrophosphate (HMP-PP) to form thiamine monophosphate (TMP). The polypeptide is Thiamine-phosphate synthase (Escherichia coli O139:H28 (strain E24377A / ETEC)).